The following is a 121-amino-acid chain: Large ribosomal subunit protein uL14 (121 aa).

This sequence belongs to the universal ribosomal protein uL14 family. In terms of assembly, part of the 50S ribosomal subunit. Forms a cluster with proteins L3 and L19. In the 70S ribosome, L14 and L19 interact and together make contacts with the 16S rRNA in bridges B5 and B8.

Functionally, binds to 23S rRNA. Forms part of two intersubunit bridges in the 70S ribosome. The polypeptide is Large ribosomal subunit protein uL14 (Synechococcus sp. (strain CC9605)).